We begin with the raw amino-acid sequence, 114 residues long: MTSLQLSIVHRLPQNYRWSAGFAGSKVEPIPQNGPCGDNSLVALKLLSPDGDNAWSVMYKLSQALSDIEVPCSVLECEGEPCLFVNRQDEFAATCRLKNFGVAIAEPFSNYNPF.

This is an uncharacterized protein from Escherichia coli O6:H1 (strain CFT073 / ATCC 700928 / UPEC).